An 858-amino-acid chain; its full sequence is Bifunctional uridylyltransferase/uridylyl-removing enzyme (858 aa).

A uridylyltransferase region spans residues 1–324 (MSASVAAPPP…PATSGVTRVL (324 aa)). The uridylyl-removing stretch occupies residues 325 to 681 (SPGRFVEKQG…ARPSPVGDAL (357 aa)). In terms of domain architecture, HD spans 443 to 565 (VDQHILMVLR…VGNERRLTAL (123 aa)). 2 consecutive ACT domains span residues 682-761 (QVLV…PEPS) and 790-858 (ILSV…AIAV).

It belongs to the GlnD family. Requires Mg(2+) as cofactor.

It catalyses the reaction [protein-PII]-L-tyrosine + UTP = [protein-PII]-uridylyl-L-tyrosine + diphosphate. The enzyme catalyses [protein-PII]-uridylyl-L-tyrosine + H2O = [protein-PII]-L-tyrosine + UMP + H(+). Uridylyltransferase (UTase) activity is inhibited by glutamine, while glutamine activates uridylyl-removing (UR) activity. In terms of biological role, modifies, by uridylylation and deuridylylation, the PII regulatory proteins (GlnB and homologs), in response to the nitrogen status of the cell that GlnD senses through the glutamine level. Under low glutamine levels, catalyzes the conversion of the PII proteins and UTP to PII-UMP and PPi, while under higher glutamine levels, GlnD hydrolyzes PII-UMP to PII and UMP (deuridylylation). Thus, controls uridylylation state and activity of the PII proteins, and plays an important role in the regulation of nitrogen assimilation and metabolism. This Burkholderia thailandensis (strain ATCC 700388 / DSM 13276 / CCUG 48851 / CIP 106301 / E264) protein is Bifunctional uridylyltransferase/uridylyl-removing enzyme.